A 117-amino-acid chain; its full sequence is Transcription elongation factor A protein-like 8 (117 aa).

Composition is skewed to basic and acidic residues over residues 1-24 (MQKS…DRPL) and 61-74 (YKED…DPEE). Residues 1–74 (MQKSCGENER…SPVRHLDPEE (74 aa)) form a disordered region. Residues 73-100 (EEMIRGADELERLREEIRRVRNKFVMMH) adopt a coiled-coil conformation.

This sequence belongs to the TFS-II family. TFA subfamily.

The protein localises to the nucleus. In terms of biological role, may be involved in transcriptional regulation. The chain is Transcription elongation factor A protein-like 8 (TCEAL8) from Bos taurus (Bovine).